Reading from the N-terminus, the 409-residue chain is Elongation factor Tu (409 aa).

Positions 10–214 constitute a tr-type G domain; sequence KPHVNIGTIG…EVDAYIPTPE (205 aa). Residues 19–26 are G1; that stretch reads GHVDHGKT. A GTP-binding site is contributed by 19–26; it reads GHVDHGKT. Threonine 26 contributes to the Mg(2+) binding site. The segment at 60–64 is G2; the sequence is GITIN. Positions 81–84 are G3; sequence DCPG. Residues 81–85 and 136–139 contribute to the GTP site; these read DCPGH and NKQD. The tract at residues 136-139 is G4; sequence NKQD. The interval 174–176 is G5; that stretch reads SAL.

It belongs to the TRAFAC class translation factor GTPase superfamily. Classic translation factor GTPase family. EF-Tu/EF-1A subfamily. In terms of assembly, monomer.

The protein resides in the cytoplasm. The enzyme catalyses GTP + H2O = GDP + phosphate + H(+). GTP hydrolase that promotes the GTP-dependent binding of aminoacyl-tRNA to the A-site of ribosomes during protein biosynthesis. This chain is Elongation factor Tu, found in Acaryochloris marina (strain MBIC 11017).